The chain runs to 117 residues: Membrane-anchored ubiquitin-fold protein 1 (117 aa).

The Ubiquitin-like domain maps to 8 to 74 (LEIKFRLTDG…LENSKTVKDY (67 aa)). The S-palmitoyl cysteine moiety is linked to residue C112. C114 is modified (cysteine methyl ester). C114 carries the S-farnesyl cysteine lipid modification. Residues 115-117 (SVM) constitute a propeptide, removed in mature form.

The protein resides in the cell membrane. Its function is as follows. May serve as docking site to facilitate the association of other proteins to the plasma membrane. The sequence is that of Membrane-anchored ubiquitin-fold protein 1 (MUB1) from Arabidopsis thaliana (Mouse-ear cress).